Reading from the N-terminus, the 332-residue chain is 5-dehydro-2-deoxygluconokinase 2 (332 aa).

The protein belongs to the carbohydrate kinase PfkB family.

The enzyme catalyses 5-dehydro-2-deoxy-D-gluconate + ATP = 6-phospho-5-dehydro-2-deoxy-D-gluconate + ADP + H(+). The protein operates within polyol metabolism; myo-inositol degradation into acetyl-CoA; acetyl-CoA from myo-inositol: step 5/7. Its function is as follows. Catalyzes the phosphorylation of 5-dehydro-2-deoxy-D-gluconate (2-deoxy-5-keto-D-gluconate or DKG) to 6-phospho-5-dehydro-2-deoxy-D-gluconate (DKGP). This Bacillus cereus (strain ZK / E33L) protein is 5-dehydro-2-deoxygluconokinase 2.